The primary structure comprises 463 residues: Glutamate--tRNA ligase 2 (463 aa).

The short motif at 11 to 21 (PSPTGYLHIGG) is the 'HIGH' region element. Residues 240–244 (KLSKR) carry the 'KMSKS' region motif. Position 243 (K243) interacts with ATP.

It belongs to the class-I aminoacyl-tRNA synthetase family. Glutamate--tRNA ligase type 1 subfamily. In terms of assembly, monomer.

The protein resides in the cytoplasm. It carries out the reaction tRNA(Glu) + L-glutamate + ATP = L-glutamyl-tRNA(Glu) + AMP + diphosphate. Its function is as follows. Catalyzes the attachment of glutamate to tRNA(Glu) in a two-step reaction: glutamate is first activated by ATP to form Glu-AMP and then transferred to the acceptor end of tRNA(Glu). In Campylobacter jejuni (strain RM1221), this protein is Glutamate--tRNA ligase 2.